Here is a 568-residue protein sequence, read N- to C-terminus: 3-(3-hydroxy-phenyl)propionate/3-hydroxycinnamic acid hydroxylase (568 aa).

Residues 13 to 42 (DVVI…IVEE) and 278 to 288 (FRKGRMFLAGD) contribute to the FAD site.

It belongs to the PheA/TfdB FAD monooxygenase family. FAD is required as a cofactor.

The catalysed reaction is 3-(3-hydroxyphenyl)propanoate + NADH + O2 + H(+) = 3-(2,3-dihydroxyphenyl)propanoate + NAD(+) + H2O. It catalyses the reaction (2E)-3-(3-hydroxyphenyl)prop-2-enoate + NADH + O2 + H(+) = (2E)-3-(2,3-dihydroxyphenyl)prop-2-enoate + NAD(+) + H2O. Its pathway is aromatic compound metabolism; 3-phenylpropanoate degradation. Catalyzes the insertion of one atom of molecular oxygen into position 2 of the phenyl ring of 3-(3-hydroxyphenyl)propionate (3-HPP) and hydroxycinnamic acid (3HCI). In Mycobacterium sp. (strain JLS), this protein is 3-(3-hydroxy-phenyl)propionate/3-hydroxycinnamic acid hydroxylase.